Here is a 224-residue protein sequence, read N- to C-terminus: Leucyl/phenylalanyl-tRNA--protein transferase (224 aa).

Belongs to the L/F-transferase family.

Its subcellular location is the cytoplasm. It catalyses the reaction N-terminal L-lysyl-[protein] + L-leucyl-tRNA(Leu) = N-terminal L-leucyl-L-lysyl-[protein] + tRNA(Leu) + H(+). It carries out the reaction N-terminal L-arginyl-[protein] + L-leucyl-tRNA(Leu) = N-terminal L-leucyl-L-arginyl-[protein] + tRNA(Leu) + H(+). The catalysed reaction is L-phenylalanyl-tRNA(Phe) + an N-terminal L-alpha-aminoacyl-[protein] = an N-terminal L-phenylalanyl-L-alpha-aminoacyl-[protein] + tRNA(Phe). Functions in the N-end rule pathway of protein degradation where it conjugates Leu, Phe and, less efficiently, Met from aminoacyl-tRNAs to the N-termini of proteins containing an N-terminal arginine or lysine. This Rhodopseudomonas palustris (strain HaA2) protein is Leucyl/phenylalanyl-tRNA--protein transferase.